Consider the following 500-residue polypeptide: NAD(P)H-quinone oxidoreductase chain 4, chloroplastic (500 aa).

The next 14 membrane-spanning stretches (helical) occupy residues 4 to 24 (FYWL…IALL), 37 to 57 (ICIC…HFQL), 80 to 100 (LGID…TTLA), 113 to 130 (LFHF…GLFS), 134 to 154 (LLLF…LLSM), 167 to 187 (FILY…GMGL), 208 to 228 (ALEI…SPII), 242 to 262 (HYST…YGLV), 272 to 292 (AHSI…IYAA), 305 to 325 (IAYS…SITD), 330 to 350 (GAIL…FLAG), 386 to 406 (LALP…GIIT), 416 to 436 (ILIT…SLSM), and 462 to 482 (IFIL…PDFV).

It belongs to the complex I subunit 4 family.

Its subcellular location is the plastid. The protein resides in the chloroplast thylakoid membrane. It carries out the reaction a plastoquinone + NADH + (n+1) H(+)(in) = a plastoquinol + NAD(+) + n H(+)(out). It catalyses the reaction a plastoquinone + NADPH + (n+1) H(+)(in) = a plastoquinol + NADP(+) + n H(+)(out). The protein is NAD(P)H-quinone oxidoreductase chain 4, chloroplastic of Nuphar advena (Common spatterdock).